The primary structure comprises 273 residues: Dermonecrotic toxin LhSicTox-alphaIA2avii (273 aa).

The active site involves histidine 5. The Mg(2+) site is built by glutamate 25 and aspartate 27. Catalysis depends on histidine 41, which acts as the Nucleophile. 2 disulfides stabilise this stretch: cysteine 45/cysteine 51 and cysteine 47/cysteine 190. Aspartate 85 serves as a coordination point for Mg(2+).

Belongs to the arthropod phospholipase D family. Class II subfamily. The cofactor is Mg(2+). In terms of tissue distribution, expressed by the venom gland.

Its subcellular location is the secreted. The enzyme catalyses an N-(acyl)-sphingosylphosphocholine = an N-(acyl)-sphingosyl-1,3-cyclic phosphate + choline. The catalysed reaction is an N-(acyl)-sphingosylphosphoethanolamine = an N-(acyl)-sphingosyl-1,3-cyclic phosphate + ethanolamine. It catalyses the reaction a 1-acyl-sn-glycero-3-phosphocholine = a 1-acyl-sn-glycero-2,3-cyclic phosphate + choline. It carries out the reaction a 1-acyl-sn-glycero-3-phosphoethanolamine = a 1-acyl-sn-glycero-2,3-cyclic phosphate + ethanolamine. Dermonecrotic toxins cleave the phosphodiester linkage between the phosphate and headgroup of certain phospholipids (sphingolipid and lysolipid substrates), forming an alcohol (often choline) and a cyclic phosphate. This toxin acts on sphingomyelin (SM). It may also act on ceramide phosphoethanolamine (CPE), lysophosphatidylcholine (LPC) and lysophosphatidylethanolamine (LPE), but not on lysophosphatidylserine (LPS), and lysophosphatidylglycerol (LPG). It acts by transphosphatidylation, releasing exclusively cyclic phosphate products as second products. Induces dermonecrosis, hemolysis, increased vascular permeability, edema, inflammatory response, and platelet aggregation. The sequence is that of Dermonecrotic toxin LhSicTox-alphaIA2avii from Loxosceles hirsuta (Recluse spider).